We begin with the raw amino-acid sequence, 394 residues long: Elongation factor Tu 2 (394 aa).

A tr-type G domain is found at 10-204 (KPHVNVGTIG…YLDSYIPEPE (195 aa)). The interval 19–26 (GHVDHGKT) is G1. Position 19–26 (19–26 (GHVDHGKT)) interacts with GTP. T26 is a Mg(2+) binding site. A G2 region spans residues 60-64 (GITIN). The G3 stretch occupies residues 81-84 (DCPG). GTP-binding positions include 81–85 (DCPGH) and 136–139 (NKCD). The tract at residues 136–139 (NKCD) is G4. Residues 174–176 (SAL) form a G5 region.

Belongs to the TRAFAC class translation factor GTPase superfamily. Classic translation factor GTPase family. EF-Tu/EF-1A subfamily. As to quaternary structure, monomer.

It localises to the cytoplasm. The catalysed reaction is GTP + H2O = GDP + phosphate + H(+). GTP hydrolase that promotes the GTP-dependent binding of aminoacyl-tRNA to the A-site of ribosomes during protein biosynthesis. This Yersinia pseudotuberculosis serotype O:1b (strain IP 31758) protein is Elongation factor Tu 2.